The chain runs to 870 residues: Radial spoke head 10 homolog B2 (870 aa).

Positions 1-16 (MVKEKKKADKKGEKSA) are enriched in basic and acidic residues. Residues 1–44 (MVKEKKKADKKGEKSARSPSSLSDNLDFSKQDGNTTRQEMSPAG) are disordered. Over residues 17 to 39 (RSPSSLSDNLDFSKQDGNTTRQE) the composition is skewed to polar residues. 10 MORN repeats span residues 86 to 108 (YEGE…GGCT), 109 to 131 (YRGM…DGLK), 132 to 154 (YEGD…DGSM), 155 to 177 (YEGE…TQPV), 179 to 201 (YIGH…QEGT), 204 to 226 (YEGD…SGNI), 227 to 249 (YEGQ…TTNE), 251 to 273 (YTGR…LKRI), 284 to 306 (YIGE…SGAM), and 307 to 329 (YDGE…NGRV). A disordered region spans residues 674-704 (NKSPSAVMSHESDAAHSDSARSSSSKLELSP). Over residues 683-692 (HESDAAHSDS) the composition is skewed to basic and acidic residues. Over residues 693–703 (ARSSSSKLELS) the composition is skewed to low complexity. Residues 784-811 (KEKIRADRLRSTAQAQQRKMEDDELEAR) adopt a coiled-coil conformation. Residues 840–870 (VSSSHLILDPPKEDVTVSPSSKTITSKKKKK) are disordered.

As to quaternary structure, interacts with RSPH6A. Does not appear to be part of the axonemal radial spoke complexes 1 or 2.

It localises to the cytoplasm. Its subcellular location is the cytoskeleton. The protein localises to the cilium axoneme. It is found in the cell projection. The protein resides in the cilium. It localises to the flagellum. May function as part of the axonemal radial spoke complex 3 (RS3). Radial spoke complexes are important for ciliary motility. This Homo sapiens (Human) protein is Radial spoke head 10 homolog B2 (RSPH10B2).